Here is a 331-residue protein sequence, read N- to C-terminus: Neurogenic differentiation factor 4 (331 aa).

The tract at residues 1 to 80 (MSKTFVKSKE…GPKKKKMTKA (80 aa)) is disordered. Residues 52 to 64 (DSIEEEEEEEEDG) are compositionally biased toward acidic residues. A compositionally biased stretch (basic residues) spans 67-79 (PKRRGPKKKKMTK). One can recognise a bHLH domain in the interval 87 to 139 (ARRVKANARERTRMHGLNDALDNLRRVMPCYSKTQKLSKIETLRLARNYIWAL). The tract at residues 246–265 (TPPYEGPLTPPLSISGNFSL) is disordered.

Efficient DNA binding requires dimerization with another bHLH protein. Post-translationally, serine or threonine phosphorylation within the basic region may regulate neurogenic activity.

It is found in the nucleus. Probably acts as a transcriptional activator. Mediates neuronal differentiation. Required for the regulation of amacrine cell fate specification in the retina. The sequence is that of Neurogenic differentiation factor 4 (NEUROD4) from Homo sapiens (Human).